We begin with the raw amino-acid sequence, 183 residues long: Globin-like protein 26 (183 aa).

The interval 1 to 25 (MGSSTSTPAPPPKKNKPEGRKADNQ) is disordered. Gly-2 is lipidated: N-myristoyl glycine. A Nuclear localization signal motif is present at residues 12–18 (PKKNKPE). Residues 26–166 (ILNSYQKSIV…VVDQLRFGYS (141 aa)) form the Globin domain. Residues His-77 and His-109 each coordinate heme.

This sequence belongs to the globin family. Homodimer. Occurs in an equilibrium of monomeric and dimeric forms in solution. Detected in the head mesodermal cell. In the tail region, detected in the stomatointestinal and anal depressor muscle cells.

It is found in the cytoplasm. It localises to the nucleus lamina. The protein localises to the cell membrane. Functionally, plays a role in electron transport. Utilizes the bis-histidyl hexacoordinated complex with iron to transfer electrons to cytochrome c and molecular oxygen. Plays a regulatory role in the periodicity of the defecation cycle under oxidative stress conditions. Not involved in imparting protection against general conditions of oxidative stress. May participate in redox reactions under anaerobic conditions. The chain is Globin-like protein 26 from Caenorhabditis elegans.